A 147-amino-acid chain; its full sequence is Hemoglobin subunit gamma (147 aa).

The region spanning 3-147 (DFTAEEKAAI…VASAVARKYH (145 aa)) is the Globin domain. Heme b contacts are provided by His-64 and His-93.

It belongs to the globin family. Heterotetramer of two alpha chains and two gamma chains in fetal hemoglobin (Hb F). Red blood cells.

In terms of biological role, gamma chains make up the fetal hemoglobin F, in combination with alpha chains. In Trichechus manatus (Caribbean manatee), this protein is Hemoglobin subunit gamma (HBG).